The sequence spans 480 residues: MRDPRVRVRFCPSPTGAPHLGLVRTALFNWVFARKHGGGFIFRIEDTDATRNREESCSQLIDTLKWLGLDWDEGPDKGGQFGPYYQSQRGDIYQEVLDKLLAADLAYESFSTKEEIEKRNLEAGRPIQLGYDNYDRTLSEQTKAAMREAGRTPIIRLRMDDENIAFEDLVKGEVVFTDPIPDFALTRASGEPLYTLVNPVDDAFMKITHVLRGEDLLSSTPRQIALYKALITIGITDYVPFFGHLPIVMGEGNRKLSKRNPESDFYFYKARGFIREGLLNYLSLLGWSISNSRDTFSLSEMIHAFDVRDVRGNPARFDYKKCLAINAYHLRELNVEDFFLRLVPFVEEMLGIPLSFEQKNSLRAICPFVQGRVQLLTEAAEMVRFLLVDNISVDFAVTDKEIDVLRHCLALLNLLDTWESAQIASCIKQAIEQFDLQPKRIFSILRLAITGRRVSPPLFESMQILGRSASLNRVETFVTN.

Residues 12–22 (PSPTGAPHLGL) carry the 'HIGH' region motif. Residues 255–259 (KLSKR) carry the 'KMSKS' region motif. Lys-258 is a binding site for ATP.

Belongs to the class-I aminoacyl-tRNA synthetase family. Glutamate--tRNA ligase type 1 subfamily. In terms of assembly, monomer.

It is found in the cytoplasm. It catalyses the reaction tRNA(Glu) + L-glutamate + ATP = L-glutamyl-tRNA(Glu) + AMP + diphosphate. In terms of biological role, catalyzes the attachment of glutamate to tRNA(Glu) in a two-step reaction: glutamate is first activated by ATP to form Glu-AMP and then transferred to the acceptor end of tRNA(Glu). The polypeptide is Glutamate--tRNA ligase (Tropheryma whipplei (strain TW08/27) (Whipple's bacillus)).